Reading from the N-terminus, the 214-residue chain is A-type ATP synthase subunit D (214 aa).

The protein belongs to the V-ATPase D subunit family. In terms of assembly, has multiple subunits with at least A(3), B(3), C, D, E, F, H, I and proteolipid K(x).

The protein resides in the cell membrane. In terms of biological role, component of the A-type ATP synthase that produces ATP from ADP in the presence of a proton gradient across the membrane. The chain is A-type ATP synthase subunit D from Thermococcus sibiricus (strain DSM 12597 / MM 739).